Consider the following 265-residue polypeptide: Thiazole synthase (265 aa).

Residue lysine 106 is the Schiff-base intermediate with DXP of the active site. Residues glycine 167, 193–194, and 215–216 contribute to the 1-deoxy-D-xylulose 5-phosphate site; these read AG and NT. The disordered stretch occupies residues 245 to 265; that stretch reads GRIPRRARAEPSSPQLGLVGS.

The protein belongs to the ThiG family. In terms of assembly, homotetramer. Forms heterodimers with either ThiH or ThiS.

The protein resides in the cytoplasm. It catalyses the reaction [ThiS sulfur-carrier protein]-C-terminal-Gly-aminoethanethioate + 2-iminoacetate + 1-deoxy-D-xylulose 5-phosphate = [ThiS sulfur-carrier protein]-C-terminal Gly-Gly + 2-[(2R,5Z)-2-carboxy-4-methylthiazol-5(2H)-ylidene]ethyl phosphate + 2 H2O + H(+). It participates in cofactor biosynthesis; thiamine diphosphate biosynthesis. Its function is as follows. Catalyzes the rearrangement of 1-deoxy-D-xylulose 5-phosphate (DXP) to produce the thiazole phosphate moiety of thiamine. Sulfur is provided by the thiocarboxylate moiety of the carrier protein ThiS. In vitro, sulfur can be provided by H(2)S. The chain is Thiazole synthase from Methylobacterium sp. (strain 4-46).